A 183-amino-acid chain; its full sequence is Apo-citrate lyase phosphoribosyl-dephospho-CoA transferase (183 aa).

Belongs to the CitX family.

It carries out the reaction apo-[citrate lyase ACP] + 2'-(5''-triphospho-alpha-D-ribosyl)-3'-dephospho-CoA = holo-[citrate lyase ACP] + diphosphate. Its function is as follows. Transfers 2-(5''-triphosphoribosyl)-3'-dephosphocoenzyme-A on a serine residue to the apo-acyl carrier protein (gamma chain) of the citrate lyase to yield holo-acyl carrier protein. This chain is Apo-citrate lyase phosphoribosyl-dephospho-CoA transferase, found in Shigella flexneri serotype 5b (strain 8401).